The chain runs to 142 residues: NTF2-related export protein 2 (142 aa).

The region spanning 17 to 136 is the NTF2 domain; it reads AAEEFVNIYY…WKIASDCFRF (120 aa).

In terms of assembly, associates with NXF1, NXF2, NXF3 and NXF5.

It is found in the nucleus. The protein localises to the cytoplasm. In terms of biological role, regulator of protein export for NES-containing proteins. Also plays a role in mRNA nuclear export. The chain is NTF2-related export protein 2 (NXT2) from Bos taurus (Bovine).